A 103-amino-acid chain; its full sequence is Phospholipase A2 large subunit (103 aa).

Residues Trp-7, Gly-9, and Gly-11 each contribute to the Ca(2+) site. Disulfide bonds link Cys-8–Cys-30, Cys-29–Cys-68, Cys-36–Cys-61, and Cys-59–Cys-96. N-linked (GlcNAc...) asparagine glycosylation occurs at Asn-16. The active site involves His-33. Asp-34 provides a ligand contact to Ca(2+).

This sequence belongs to the phospholipase A2 family. Group III subfamily. In terms of assembly, heterodimer composed of a large subunit and a small subunit; disulfide-linked. Ca(2+) is required as a cofactor. As to expression, expressed by the venom gland.

The protein resides in the secreted. The catalysed reaction is a 1,2-diacyl-sn-glycero-3-phosphocholine + H2O = a 1-acyl-sn-glycero-3-phosphocholine + a fatty acid + H(+). Phospholipase toxin, which catalyzes the calcium-dependent hydrolysis of the 2-acyl groups in 3-sn-phosphoglycerides. Inhibits both skeletal (RYR1) and cardiac (RYR2) ryanodine receptors (calcium release channels). Probably blocks ryanodine receptors by generating a lipid product. This Chersonesometrus fulvipes (Indian black scorpion) protein is Phospholipase A2 large subunit.